A 72-amino-acid chain; its full sequence is Translation initiation factor IF-1 (72 aa).

Positions 1–72 constitute an S1-like domain; the sequence is MSKDDSIEFE…TKGRITYRMK (72 aa).

It belongs to the IF-1 family. In terms of assembly, component of the 30S ribosomal translation pre-initiation complex which assembles on the 30S ribosome in the order IF-2 and IF-3, IF-1 and N-formylmethionyl-tRNA(fMet); mRNA recruitment can occur at any time during PIC assembly.

It localises to the cytoplasm. Functionally, one of the essential components for the initiation of protein synthesis. Stabilizes the binding of IF-2 and IF-3 on the 30S subunit to which N-formylmethionyl-tRNA(fMet) subsequently binds. Helps modulate mRNA selection, yielding the 30S pre-initiation complex (PIC). Upon addition of the 50S ribosomal subunit IF-1, IF-2 and IF-3 are released leaving the mature 70S translation initiation complex. This is Translation initiation factor IF-1 from Xanthomonas campestris pv. campestris (strain 8004).